The sequence spans 495 residues: 3-octaprenyl-4-hydroxybenzoate carboxy-lyase (495 aa).

Asn-172 serves as a coordination point for Mn(2+). Prenylated FMN-binding positions include 175–177 (IYR), 189–191 (RWL), and 194–195 (RG). Residue Glu-238 participates in Mn(2+) binding. Asp-287 functions as the Proton donor in the catalytic mechanism.

Belongs to the UbiD family. Homohexamer. Requires prenylated FMN as cofactor. Mn(2+) serves as cofactor.

It localises to the cell membrane. The catalysed reaction is a 4-hydroxy-3-(all-trans-polyprenyl)benzoate + H(+) = a 2-(all-trans-polyprenyl)phenol + CO2. The protein operates within cofactor biosynthesis; ubiquinone biosynthesis. Functionally, catalyzes the decarboxylation of 3-octaprenyl-4-hydroxy benzoate to 2-octaprenylphenol, an intermediate step in ubiquinone biosynthesis. The protein is 3-octaprenyl-4-hydroxybenzoate carboxy-lyase of Yersinia pestis bv. Antiqua (strain Angola).